Consider the following 465-residue polypeptide: U4/U6 small nuclear ribonucleoprotein PRP4 (465 aa).

WD repeat units follow at residues 173 to 212, 216 to 256, 263 to 302, 305 to 344, 347 to 386, 391 to 432, and 435 to 464; these read VSTKPISAVSLSTDDMVVATGSWAGDLQVLNSQTLQPLTQ, SHVG…GGLR, GHERRISDVKYHPSGKFIGSASHDMTWRLWDASTHQELLL, GHDKGVFSLSFQCDGSLVCSGGMDSLSMLWDIRSGSKVMT, GHSKPIYTVAWSPNGYQVATGGGDGIINVWDIRKRDEGQL, AHRN…KMGS, and GHTDKIISLDISNNSHFLVSGGWDRSIKLW.

In terms of assembly, component of the U4/U6-U5 tri-snRNP complex composed of the U4, U6 and U5 snRNAs and at least PRP3, PRP4, PRP6, PRP8, PRP18, PRP31, PRP38, SNU13, SNU23, SNU66, SNU114, SPP381, SMB1, SMD1, SMD2, SMD3, SMX2, SMX3, LSM2, LSM3, LSM4, LSM5, LSM6, LSM7, LSM8, BRR2 and DIB1.

The protein localises to the nucleus. In terms of biological role, involved in RNA splicing. Is required for the association of U4/U6 snRNP with U5 snRNP in an early step of spliceosome assembly. The polypeptide is U4/U6 small nuclear ribonucleoprotein PRP4 (PRP4) (Saccharomyces cerevisiae (strain ATCC 204508 / S288c) (Baker's yeast)).